We begin with the raw amino-acid sequence, 728 residues long: LPS-assembly protein LptD (728 aa).

A signal peptide spans 1-21; sequence MSALPGFTLAALLLNVSLAEA.

It belongs to the LptD family. As to quaternary structure, component of the lipopolysaccharide transport and assembly complex. Interacts with LptE and LptA.

The protein localises to the cell outer membrane. Together with LptE, is involved in the assembly of lipopolysaccharide (LPS) at the surface of the outer membrane. The chain is LPS-assembly protein LptD from Thiobacillus denitrificans (strain ATCC 25259 / T1).